Here is a 406-residue protein sequence, read N- to C-terminus: MMFGIGIVLFALAILVSVALHECGHMWVARATGMKVRRYFVGFGPTLWSTRRANRLGSTEYGIKAIPLGGFCDIAGMTSVDEIAPEDRPYAMYKQKVWKRVAVLFAGPAMNFVIGLVLIYGIAIVWGLPNLHQPTTAIVGETGCVAPQITLEEMGECTGPGPAALAGIQAGDEIVKVGDTEVKDFAGMAAAVRKLDGPTRIEFKRDGRVMDTVVDVTPTQRFTSADASAPSTVGAIGVSAVPVQPPAQYNPITAVPATFAFTGDLAVELGKSLAKIPTKIGALVEAIGGGERDKETPISVVGASIIGGETVDAGLWVAFWFFLAQLNFVLGAINLVPLLPFDGGHIAVATYEKIRNMIRSARGMVAAGPVNYLKLMPATYVVLAVVAGYMLLTVTADLVNPLSIFQ.

A helical transmembrane segment spans residues 1 to 21 (MMFGIGIVLFALAILVSVALH). A Zn(2+)-binding site is contributed by His21. Residue Glu22 is part of the active site. Zn(2+) is bound at residue His25. Residues 108–128 (PAMNFVIGLVLIYGIAIVWGL) traverse the membrane as a helical segment. The PDZ domain occupies 125–209 (VWGLPNLHQP…RIEFKRDGRV (85 aa)). Position 206 (Asp206) interacts with Zn(2+). 2 helical membrane passes run 327–349 (NFVL…IAVA) and 375–395 (LMPA…LTVT).

The protein belongs to the peptidase M50B family. Requires Zn(2+) as cofactor.

The protein resides in the cell membrane. Proteolysis is inhibited by Wag31; when Wag31 is non-functional oxidative stress increases proteolysis. Its function is as follows. A probable intramembrane site-2 protease (S2P) that cleaves type-2 transmembrane proteins within their membrane-spanning domains. Degrades PbpB (PBP3, FtsI) under conditions of oxidatives stress; degradation is inhibited by Wag31-PbpB interaction. Also cleaves anti-sigma factors RskA, RslA and RslM. Site-1 proteases have not yet been identified in this organism. Regulated intramembrane proteolysis (RIP) occurs when an extracytoplasmic signal (possibly oxidative stress) triggers a concerted proteolytic cascade to transmit information and elicit cellular responses. The membrane-spanning regulatory substrate protein (includes anti-sigma factors RskA, RslA, RsmA, and PbpB) is first cut extracytoplasmically (site-1 protease, S1P), then within the membrane itself (site-2 protease, S2P, this entry), while cytoplasmic proteases finish degrading the regulatory protein, liberating the effector protein (ECF sigma factors SigK, SigL and SigM). This Mycolicibacterium smegmatis (strain ATCC 700084 / mc(2)155) (Mycobacterium smegmatis) protein is Zinc metalloprotease Rip1 (rip1).